We begin with the raw amino-acid sequence, 593 residues long: Capsid protein 1 (593 aa).

The protein belongs to the NCLDV major capsid protein family.

It localises to the virion. The protein is Capsid protein 1 of Acanthamoeba polyphaga mimivirus (APMV).